The chain runs to 355 residues: NADH dehydrogenase [ubiquinone] 1 alpha subcomplex subunit 10, mitochondrial (355 aa).

A mitochondrion-targeting transit peptide spans 1-35 (MALRLLRLVPASASARGLAAGAQRVGRIHTSVHCK). At K122 the chain carries N6-acetyllysine; alternate. Position 122 is an N6-succinyllysine; alternate (K122). S250 carries the post-translational modification Phosphoserine; by PINK1. N6-succinyllysine is present on K285.

This sequence belongs to the complex I NDUFA10 subunit family. Complex I is composed of 45 different subunits. This a component of the hydrophobic protein fraction. FAD serves as cofactor. In terms of processing, phosphorylation at Ser-250 by PINK1 is required for the binding and/or reduction of the complex I substrate ubiquinone. As to expression, expressed in the head and flagellum of epididymal sperm but not in testicular sperm (at protein level).

It localises to the mitochondrion matrix. Functionally, accessory subunit of the mitochondrial membrane respiratory chain NADH dehydrogenase (Complex I), that is believed not to be involved in catalysis. Complex I functions in the transfer of electrons from NADH to the respiratory chain. The immediate electron acceptor for the enzyme is believed to be ubiquinone. This chain is NADH dehydrogenase [ubiquinone] 1 alpha subcomplex subunit 10, mitochondrial (Ndufa10), found in Rattus norvegicus (Rat).